Reading from the N-terminus, the 142-residue chain is Universal stress protein G (142 aa).

This sequence belongs to the universal stress protein A family.

The protein is Universal stress protein G (uspG) of Shigella flexneri.